The chain runs to 61 residues: Large ribosomal subunit protein bL33 (61 aa).

The protein belongs to the bacterial ribosomal protein bL33 family.

The chain is Large ribosomal subunit protein bL33 from Amoebophilus asiaticus (strain 5a2).